A 171-amino-acid polypeptide reads, in one-letter code: Iron-sulfur cluster assembly protein 1 (171 aa).

The transit peptide at 1–55 (MLRAGGRRLLAPGLRRVLGGGAAAPVAVGGAKAYHERVVDHYENPRNVGSFENDD) directs the protein to the mitochondrion.

The protein belongs to the NifU family. In terms of assembly, component of the core Fe-S cluster (ISC) assembly machinery. [2Fe-2S] cluster serves as cofactor.

It is found in the mitochondrion matrix. It participates in cofactor biosynthesis; iron-sulfur cluster biosynthesis. In terms of biological role, scaffold protein for the de novo synthesis of iron-sulfur (Fe-S) clusters within mitochondria, which is required for maturation of both mitochondrial and cytoplasmic [2Fe-2S] and [4Fe-4S] proteins. First, a [2Fe-2S] cluster is transiently assembled on the scaffold protein ISCU (ISU1, ISU2 or ISU3). In a second step, the cluster is released from ISCU, transferred to a glutaredoxin, followed by the formation of mitochondrial [2Fe-2S] proteins, the synthesis of [4Fe-4S] clusters and their target-specific insertion into the recipient apoproteins. Cluster assembly on ISCU depends on the function of the cysteine desulfurase complex NFS1-ISD11, which serves as the sulfur donor for cluster synthesis, the iron-binding protein frataxin as the putative iron donor, and the electron transfer chain comprised of ferredoxin reductase and ferredoxin, which receive their electrons from NADH. This chain is Iron-sulfur cluster assembly protein 1, found in Oryza sativa subsp. japonica (Rice).